The primary structure comprises 44 residues: Non-structural protein 7b (44 aa).

A helical membrane pass occupies residues 9-29; the sequence is FYLCFLAFLLFLVLIMLLIFW.

It is found in the host membrane. The chain is Non-structural protein 7b from Bat coronavirus HKU3 (BtCoV).